The sequence spans 121 residues: Small ribosomal subunit protein uS13 (121 aa).

Residues 93-121 form a disordered region; it reads KGLPMRGQRTRTNARTRKGPRRAAQALKK.

Belongs to the universal ribosomal protein uS13 family. As to quaternary structure, part of the 30S ribosomal subunit. Forms a loose heterodimer with protein S19. Forms two bridges to the 50S subunit in the 70S ribosome.

Its function is as follows. Located at the top of the head of the 30S subunit, it contacts several helices of the 16S rRNA. In the 70S ribosome it contacts the 23S rRNA (bridge B1a) and protein L5 of the 50S subunit (bridge B1b), connecting the 2 subunits; these bridges are implicated in subunit movement. Contacts the tRNAs in the A and P-sites. The protein is Small ribosomal subunit protein uS13 of Burkholderia ambifaria (strain ATCC BAA-244 / DSM 16087 / CCUG 44356 / LMG 19182 / AMMD) (Burkholderia cepacia (strain AMMD)).